The sequence spans 931 residues: Protocadherin gamma-A5 (931 aa).

The N-terminal stretch at 1–29 (MASPPRGWGCGELLLPFMLLGTLCEPGSG) is a signal peptide. 6 consecutive Cadherin domains span residues 30-133 (QIRY…FPRF), 134-242 (RDEE…APLF), 243-347 (TPSE…APEV), 348-452 (ILTS…PPNF), 453-562 (PQAS…TPEI), and 570-683 (DGST…TPID). Residues 30–692 (QIRYSMPEEL…DPEDLDLTLY (663 aa)) are Extracellular-facing. N-linked (GlcNAc...) asparagine glycosylation is found at asparagine 419 and asparagine 545. A helical transmembrane segment spans residues 693–713 (LVVAVAAVSCVFLAFVIVLLV). At 714–931 (LRLRRWHKSR…KKKSGKKEKK (218 aa)) the chain is on the cytoplasmic side. Disordered regions lie at residues 800-840 (NKEE…WPNN) and 901-931 (ATLT…KEKK). Over residues 809–840 (APPNTDWRFSQAQRPGTSGSQNGDDTGTWPNN) the composition is skewed to polar residues. Residues 921 to 931 (NKKKSGKKEKK) show a composition bias toward basic residues.

The protein localises to the cell membrane. Potential calcium-dependent cell-adhesion protein. May be involved in the establishment and maintenance of specific neuronal connections in the brain. This Homo sapiens (Human) protein is Protocadherin gamma-A5 (PCDHGA5).